The following is a 117-amino-acid chain: Large ribosomal subunit protein uL18 (117 aa).

It belongs to the universal ribosomal protein uL18 family. Part of the 50S ribosomal subunit; part of the 5S rRNA/L5/L18/L25 subcomplex. Contacts the 5S and 23S rRNAs.

This is one of the proteins that bind and probably mediate the attachment of the 5S RNA into the large ribosomal subunit, where it forms part of the central protuberance. This chain is Large ribosomal subunit protein uL18, found in Histophilus somni (strain 129Pt) (Haemophilus somnus).